Reading from the N-terminus, the 92-residue chain is Small ribosomal subunit protein uS19 (92 aa).

It belongs to the universal ribosomal protein uS19 family.

Protein S19 forms a complex with S13 that binds strongly to the 16S ribosomal RNA. The protein is Small ribosomal subunit protein uS19 of Legionella pneumophila (strain Paris).